A 221-amino-acid chain; its full sequence is UPF0758 protein Ent638_0101 (221 aa).

Positions 99 to 221 (PLLSPEMTKD…YVSFAEQGWI (123 aa)) constitute an MPN domain. Zn(2+) contacts are provided by histidine 170, histidine 172, and aspartate 183. Residues 170–183 (HNHPSGCAEPSKAD) carry the JAMM motif motif.

Belongs to the UPF0758 family. YicR subfamily.

The chain is UPF0758 protein Ent638_0101 from Enterobacter sp. (strain 638).